A 213-amino-acid chain; its full sequence is Phosphatidylserine decarboxylase proenzyme (213 aa).

Serine 182 functions as the Schiff-base intermediate with substrate; via pyruvic acid in the catalytic mechanism. Serine 182 is modified (pyruvic acid (Ser); by autocatalysis).

It belongs to the phosphatidylserine decarboxylase family. PSD-A subfamily. As to quaternary structure, heterodimer of a large membrane-associated beta subunit and a small pyruvoyl-containing alpha subunit. Requires pyruvate as cofactor. Is synthesized initially as an inactive proenzyme. Formation of the active enzyme involves a self-maturation process in which the active site pyruvoyl group is generated from an internal serine residue via an autocatalytic post-translational modification. Two non-identical subunits are generated from the proenzyme in this reaction, and the pyruvate is formed at the N-terminus of the alpha chain, which is derived from the carboxyl end of the proenzyme. The post-translation cleavage follows an unusual pathway, termed non-hydrolytic serinolysis, in which the side chain hydroxyl group of the serine supplies its oxygen atom to form the C-terminus of the beta chain, while the remainder of the serine residue undergoes an oxidative deamination to produce ammonia and the pyruvoyl prosthetic group on the alpha chain.

Its subcellular location is the cell membrane. The enzyme catalyses a 1,2-diacyl-sn-glycero-3-phospho-L-serine + H(+) = a 1,2-diacyl-sn-glycero-3-phosphoethanolamine + CO2. The protein operates within phospholipid metabolism; phosphatidylethanolamine biosynthesis; phosphatidylethanolamine from CDP-diacylglycerol: step 2/2. In terms of biological role, catalyzes the formation of phosphatidylethanolamine (PtdEtn) from phosphatidylserine (PtdSer). This is Phosphatidylserine decarboxylase proenzyme from Geotalea daltonii (strain DSM 22248 / JCM 15807 / FRC-32) (Geobacter daltonii).